Consider the following 277-residue polypeptide: Short chain dehydrogenase penD (277 aa).

Ile-28, Asp-76, and Asn-105 together coordinate NADP(+). Catalysis depends on proton donor residues Ser-158 and Ser-159. 3 residues coordinate NADP(+): Tyr-173, Lys-177, and Thr-209. The active-site Proton acceptor is Tyr-173. Lys-177 (lowers pKa of active site Tyr) is an active-site residue.

The protein belongs to the short-chain dehydrogenases/reductases (SDR) family.

It carries out the reaction yaequinolone D + NADPH + H(+) = penigequinolone A + NADP(+) + H2O. The enzyme catalyses yaequinolone D + NADPH + H(+) = penigequinolone B + NADP(+) + H2O. Its pathway is secondary metabolite biosynthesis. It functions in the pathway alkaloid biosynthesis. The protein operates within mycotoxin biosynthesis. Its function is as follows. Short chain dehydrogenase; part of the gene cluster that mediates the biosynthesis of penigequinolones, potent insecticidal alkaloids that contain a highly modified 10-carbon prenyl group. The first stage is catalyzed by the nonribosomal peptide synthetase penN that condenses anthranilic acid and O-methyl-L-tyrosine to produce 4'-methoxycyclopeptin. 4'-methoxycyclopeptin is then converted to 4'-methoxydehydrocyclopeptin by the ketoglutarate-dependent dioxygenase penM through dehydrogenation to form a double bond between C-alpha and C-beta of the O-methyltyrosine side chain. PenM also converts its first product methoxydehydrocyclopeptin to 4'-methoxycyclopenin. The following conversion of 4'methoxycyclopenin into 4'-methoxyviridicatin is catalyzed by the cyclopenase penL. 4'-methoxyviridicatin is the precursor of quinolone natural products, and is further converted to quinolinone B. The prenyltransferase penI then catalyzes the canonical Friedel-Crafts alkylation of quinolinone B with dimethylallyl cation to yield dimethylallyl quinolone, which is subjected to FAD-dependent dehydrogenation by the FAD-linked oxidoreductase penH to yield conjugated aryl diene. The delta(3') double bond then serves as the site of the second alkylation with DMAPP catalyzed by the prenyltransferase penG to yield a carbenium ion intermediate, which can be attacked by H(2)O to yield a styrenyl quinolone containing a C3'-hydroxyprenyl chain, or undergo cyclization to yield yaequinolones J1 and J2. The conversion of the styrenyl quinolone into the tetrahydrofuran-containing yaequinolone C is performed by the FAD-dependent monooxygenase penE and involves epoxidation of the terminal C7'-C8' olefin, followed by epoxide ring opening initiated by the C3' hydroxyl group. The predicted cysteine hydrolase penJ acts as an epoxide hydrolase that enhances the rate of the 5-exo-tet cyclization step, increasing the yield of yaequinolone C. PenF catalyzes the cationic rearrangement of the epoxide formed by penE (before ring opening to produce yaequinolone C) into yaequinolone D. Finally, the short-chain dehydrogenase/reductase (SDR)-like reductase penD, catalyzes both the dehydration of yaequinolone D and the reduction of the resulting oxonium to yield penigequinolone. This Penicillium thymicola protein is Short chain dehydrogenase penD.